The chain runs to 81 residues: MRKLALVPIQFYRYAISPLMASHCRFYPSCSCYAYEAIDNHGLLRGGWLSIRRLGRCHPWNPGGYDPVPAVPTSRSSSMAE.

The protein belongs to the UPF0161 family.

It is found in the cell inner membrane. Could be involved in insertion of integral membrane proteins into the membrane. This is Putative membrane protein insertion efficiency factor from Pseudomonas syringae pv. tomato (strain ATCC BAA-871 / DC3000).